We begin with the raw amino-acid sequence, 259 residues long: 4-hydroxy-tetrahydrodipicolinate reductase (259 aa).

NAD(+)-binding positions include 9–14 (GAGGRM) and Glu-35. Arg-36 contacts NADP(+). NAD(+) contacts are provided by residues 92 to 94 (GTT) and 116 to 119 (APNM). His-149 (proton donor/acceptor) is an active-site residue. His-150 is a (S)-2,3,4,5-tetrahydrodipicolinate binding site. Residue Lys-153 is the Proton donor of the active site. Residue 159–160 (GT) coordinates (S)-2,3,4,5-tetrahydrodipicolinate.

The protein belongs to the DapB family.

The protein resides in the cytoplasm. The catalysed reaction is (S)-2,3,4,5-tetrahydrodipicolinate + NAD(+) + H2O = (2S,4S)-4-hydroxy-2,3,4,5-tetrahydrodipicolinate + NADH + H(+). The enzyme catalyses (S)-2,3,4,5-tetrahydrodipicolinate + NADP(+) + H2O = (2S,4S)-4-hydroxy-2,3,4,5-tetrahydrodipicolinate + NADPH + H(+). The protein operates within amino-acid biosynthesis; L-lysine biosynthesis via DAP pathway; (S)-tetrahydrodipicolinate from L-aspartate: step 4/4. In terms of biological role, catalyzes the conversion of 4-hydroxy-tetrahydrodipicolinate (HTPA) to tetrahydrodipicolinate. The sequence is that of 4-hydroxy-tetrahydrodipicolinate reductase from Nitratidesulfovibrio vulgaris (strain DSM 19637 / Miyazaki F) (Desulfovibrio vulgaris).